A 301-amino-acid chain; its full sequence is Ribosomal RNA small subunit methyltransferase H (301 aa).

Residues 25-27 (GGH), Asp-45, Phe-72, Asp-94, and Gln-101 each bind S-adenosyl-L-methionine.

It belongs to the methyltransferase superfamily. RsmH family.

The protein localises to the cytoplasm. It carries out the reaction cytidine(1402) in 16S rRNA + S-adenosyl-L-methionine = N(4)-methylcytidine(1402) in 16S rRNA + S-adenosyl-L-homocysteine + H(+). Its function is as follows. Specifically methylates the N4 position of cytidine in position 1402 (C1402) of 16S rRNA. The polypeptide is Ribosomal RNA small subunit methyltransferase H (Methylococcus capsulatus (strain ATCC 33009 / NCIMB 11132 / Bath)).